The sequence spans 953 residues: Pyruvate, phosphate dikinase, chloroplastic (953 aa).

The N-terminal 77 residues, 1 to 77, are a transit peptide targeting the chloroplast; it reads MMSSLSVEGM…VLNPVSPPVT (77 aa). Positions 55–74 are disordered; it reads PELRSSGLTPPRAVLNPVSP. T533 is subject to Phosphothreonine; by PDRP1. H535 functions as the Tele-phosphohistidine intermediate in the catalytic mechanism. 7 residues coordinate substrate: R641, R698, E827, G848, T849, N850, and D851. E827 contributes to the Mg(2+) binding site. D851 serves as a coordination point for Mg(2+). The Proton donor role is filled by C913.

Belongs to the PEP-utilizing enzyme family. Homotetramer. The cofactor is Mg(2+). Post-translationally, phosphorylation of Thr-533 in the dark inactivates the enzyme. Dephosphorylation upon light stimulation reactivates the enzyme. As to expression, isoform 1 mainly localized in mesophyll cells and only a low level is found in bundle sheath cells. Isoform 2 is expressed in roots and stems.

The protein localises to the plastid. It localises to the chloroplast. Its subcellular location is the cytoplasm. It catalyses the reaction pyruvate + phosphate + ATP = phosphoenolpyruvate + AMP + diphosphate + H(+). It participates in photosynthesis; C4 acid pathway. Activated by light-induced dephosphorylation. Inhibited by dark-induced phosphorylation. Both reactions are catalyzed by PDRP1. Its function is as follows. Formation of phosphoenolpyruvate, which is the primary acceptor of CO(2) in C4 and some Crassulacean acid metabolism plants. This is Pyruvate, phosphate dikinase, chloroplastic (PPDK) from Flaveria trinervia (Clustered yellowtops).